The primary structure comprises 264 residues: Expansin-B3 (264 aa).

The first 25 residues, 1 to 25 (MQLFPVMLATLCIVLQLLIGSSALA), serve as a signal peptide directing secretion. The Expansin-like EG45 domain maps to 54–162 (GGACGYGTLV…RRTACKYRGK (109 aa)). Disulfide bonds link Cys-57–Cys-86, Cys-89–Cys-157, and Cys-94–Cys-100. The region spanning 175–256 (FWLSLLVEFE…NWAPKATYSS (82 aa)) is the Expansin-like CBD domain.

The protein belongs to the expansin family. Expansin B subfamily.

The protein localises to the secreted. The protein resides in the cell wall. Its subcellular location is the membrane. Its function is as follows. May cause loosening and extension of plant cell walls by disrupting non-covalent bonding between cellulose microfibrils and matrix glucans. No enzymatic activity has been found. This chain is Expansin-B3 (EXPB3), found in Arabidopsis thaliana (Mouse-ear cress).